Consider the following 422-residue polypeptide: uncharacterized protein (422 aa).

Helical transmembrane passes span 23–43 (IVKI…LIYD), 47–67 (AIGT…LAPV), 90–110 (AIVL…WFVM), 112–132 (LMIV…ALIP), 151–171 (AQIV…FISP), 172–192 (SYTM…VLFI), 228–248 (ILYP…PWEA), 263–283 (IVYS…GFVL), 291–308 (YGLL…AFFI), 318–340 (VFFA…YTII), 352–372 (VYAV…VICG), and 381–401 (GKVI…ILLF).

This sequence belongs to the major facilitator superfamily.

The protein localises to the cell membrane. This is an uncharacterized protein from Bacillus subtilis (strain 168).